The primary structure comprises 244 residues: Ribonuclease HII (244 aa).

Residues Arg31–Gly222 enclose the RNase H type-2 domain. A divalent metal cation is bound by residues Asp37, Glu38, and Asp130.

It belongs to the RNase HII family. The cofactor is Mn(2+). Mg(2+) serves as cofactor.

The protein localises to the cytoplasm. It catalyses the reaction Endonucleolytic cleavage to 5'-phosphomonoester.. Its function is as follows. Endonuclease that specifically degrades the RNA of RNA-DNA hybrids. This Xanthomonas axonopodis pv. citri (strain 306) protein is Ribonuclease HII.